Consider the following 370-residue polypeptide: Phosphate acyltransferase (370 aa).

The protein belongs to the PlsX family. In terms of assembly, homodimer. Probably interacts with PlsY.

It is found in the cytoplasm. The enzyme catalyses a fatty acyl-[ACP] + phosphate = an acyl phosphate + holo-[ACP]. It participates in lipid metabolism; phospholipid metabolism. Its function is as follows. Catalyzes the reversible formation of acyl-phosphate (acyl-PO(4)) from acyl-[acyl-carrier-protein] (acyl-ACP). This enzyme utilizes acyl-ACP as fatty acyl donor, but not acyl-CoA. The chain is Phosphate acyltransferase from Polaromonas naphthalenivorans (strain CJ2).